We begin with the raw amino-acid sequence, 356 residues long: Tyrosine recombinase XerS (356 aa).

The region spanning 16–121 (LMPWYVLEYY…ALSSLYKYLT (106 aa)) is the Core-binding (CB) domain. Residues 169–354 (GFLTYIDQEH…VNDEQKNALD (186 aa)) enclose the Tyr recombinase domain. Catalysis depends on residues R210, K234, H306, R309, and H332. Y341 acts as the O-(3'-phospho-DNA)-tyrosine intermediate in catalysis.

Belongs to the 'phage' integrase family. XerS subfamily.

The protein localises to the cytoplasm. FtsK is required for recombination. Functionally, site-specific tyrosine recombinase, which acts by catalyzing the cutting and rejoining of the recombining DNA molecules. Essential to convert dimers of the bacterial chromosome into monomers to permit their segregation at cell division. This Streptococcus pneumoniae serotype 19F (strain G54) protein is Tyrosine recombinase XerS.